The primary structure comprises 283 residues: MCNTPTYCDLGKAAKDVFNKGYGFGMVKIDLRTKSCSGVEFSTSGHAYTDTGKASGNLETKYKVCNYGLTFTQKWNTDNTLGTEISLENKLAEGLKLTLDTIFVPNTGKKSGKLKASYKRDCFSLGSNVDIDFSGPTIYGWAVLAFEGWLAGYQMSFDTAKSKLSQNNFALGYKAADFQLHTHVNDGTEFGGSIYQKVNEKIETSINLAWTAGSNNTRFGIAAKYKLDCRTSLSAKVNNASLIGLGYTQTLRPGVKLTLSALIDGKNFNAGGHKVGLGFELEA.

An N-acetylcysteine modification is found at cysteine 2. Threonine 4 is modified (phosphothreonine). N6-acetyllysine is present on residues lysine 12, lysine 15, and lysine 20. The next 2 beta stranded transmembrane spans lie at 26 to 35 (MVKIDLRTKS) and 39 to 47 (VEFSTSGHA). Lysine 53 is covalently cross-linked (Glycyl lysine isopeptide (Lys-Gly) (interchain with G-Cter in ubiquitin)). 3 beta stranded membrane passes run 54 to 64 (ASGNLETKYKV), 69 to 76 (LTFTQKWN), and 80 to 89 (TLGTEISLEN). Lysine 90 carries the N6-acetyllysine modification. A beta stranded membrane pass occupies residues 95-104 (LKLTLDTIFV). Glycyl lysine isopeptide (Lys-Gly) (interchain with G-Cter in ubiquitin) cross-links involve residues lysine 109 and lysine 110. 10 beta stranded membrane passes run 111 to 120 (SGKLKASYKR), 123 to 130 (FSLGSNVD), 137 to 145 (TIYGWAVLA), 150 to 158 (LAGYQMSFD), 163 to 175 (KLSQNNFALGYKA), 178 to 185 (FQLHTHVN), 189 to 198 (EFGGSIYQKV), 202 to 211 (IETSINLAWT), 218 to 227 (RFGIAAKYKL), and 231 to 238 (TSLSAKVN). Position 241 is a phosphoserine (serine 241). NAD(+)-binding positions include 242 to 244 (LIG) and 260 to 264 (SALID). Transmembrane regions (beta stranded) follow at residues 242–251 (LIGLGYTQTL) and 254–263 (GVKLTLSALI). Lysine 266 is modified (N6-acetyllysine; alternate). A Glycyl lysine isopeptide (Lys-Gly) (interchain with G-Cter in ubiquitin); alternate cross-link involves residue lysine 266. Residues 273–282 (HKVGLGFELE) traverse the membrane as a beta stranded segment.

Belongs to the eukaryotic mitochondrial porin family. In terms of assembly, interacts with ARMC12 in a TBC1D21-dependent manner. Interacts with MISFA. In terms of processing, ubiquitinated by PRKN during mitophagy, leading to its degradation and enhancement of mitophagy. Deubiquitinated by USP30.

Its subcellular location is the mitochondrion outer membrane. It is found in the membrane. It catalyses the reaction chloride(in) = chloride(out). It carries out the reaction K(+)(in) = K(+)(out). Functionally, non-selective voltage-gated ion channel that mediates the transport of anions and cations through the mitochondrion outer membrane and plasma membrane. Forms a high-conducting channel with a stable open state and a voltage-induced closure with a mild preference for anions over cations. Involved in male fertility and sperm mitochondrial sheath formation. The polypeptide is Non-selective voltage-gated ion channel VDAC3 (Oryctolagus cuniculus (Rabbit)).